The sequence spans 303 residues: Nodulation protein D (303 aa).

Residues 6–63 enclose the HTH lysR-type domain; sequence LDLNLLVALDALMTERKLTAAARSINLSQPAMSAAISRLRDYFRDDLFIMQRRELVPT. Positions 23 to 42 form a DNA-binding region, H-T-H motif; sequence LTAAARSINLSQPAMSAAIS.

It belongs to the LysR transcriptional regulatory family.

Its function is as follows. NodD regulates the expression of the nodABCFE genes which encode other nodulation proteins. NodD is also a negative regulator of its own expression. Binds flavonoids as inducers. This Rhizobium leguminosarum bv. viciae protein is Nodulation protein D (nodD).